A 1500-amino-acid polypeptide reads, in one-letter code: Carbamoyl-phosphate synthase [ammonia], mitochondrial (1500 aa).

A mitochondrion-targeting transit peptide spans 1–38 (MTRILTACKVVKTLKSGFGFANVTTKRQWDFSRPGIRL). The anthranilate phosphoribosyltransferase homolog stretch occupies residues 39–218 (LSVKAKTAHI…VKVFGKGNPT (180 aa)). N6-acetyllysine; alternate is present on residues Lys-44, Lys-55, Lys-57, and Lys-119. Lys-44, Lys-55, Lys-57, and Lys-119 each carry N6-succinyllysine; alternate. An N6-glutaryllysine; alternate modification is found at Lys-55. Residue Ser-148 is modified to Phosphoserine. Lys-157 and Lys-171 each carry N6-acetyllysine; alternate. An N6-succinyllysine; alternate modification is found at Lys-157. N6-glutaryllysine; alternate is present on Lys-171. Lys-176 is subject to N6-glutaryllysine. Lys-182 carries the N6-acetyllysine modification. Phosphoserine is present on Ser-189. An N6-acetyllysine modification is found at Lys-197. Residues Lys-207, Lys-210, Lys-214, Lys-219, and Lys-228 each carry the N6-acetyllysine; alternate modification. Position 207 is an N6-succinyllysine; alternate (Lys-207). N6-glutaryllysine; alternate is present on residues Lys-207, Lys-210, Lys-214, Lys-219, and Lys-228. At Lys-214 the chain carries N6-succinyllysine; alternate. The 186-residue stretch at 219-404 (KVVAVDCGIK…FSLIKKGKGT (186 aa)) folds into the Glutamine amidotransferase type-1 domain. Position 237 is an N6-glutaryllysine (Lys-237). Lys-279 is subject to N6-acetyllysine. An N6-acetyllysine; alternate mark is found at Lys-280, Lys-287, Lys-307, and Lys-310. At Lys-280 the chain carries N6-glutaryllysine; alternate. An N6-succinyllysine; alternate mark is found at Lys-287 and Lys-307. An N6-glutaryllysine; alternate mark is found at Lys-307 and Lys-310. Lys-400 carries the N6-succinyllysine modification. 2 positions are modified to N6-succinyllysine; alternate: Lys-402 and Lys-412. 4 positions are modified to N6-glutaryllysine; alternate: Lys-402, Lys-412, Lys-453, and Lys-458. 6 positions are modified to N6-acetyllysine; alternate: Lys-412, Lys-453, Lys-458, Lys-522, Lys-527, and Lys-532. An N6-succinyllysine; alternate mark is found at Lys-458, Lys-522, and Lys-527. An N6-glutaryllysine; alternate mark is found at Lys-527 and Lys-532. Ser-537 bears the Phosphoserine; alternate mark. Residue Ser-537 is glycosylated (O-linked (GlcNAc) serine; alternate). Phosphoserine is present on Ser-540. Residues 551 to 743 (SDKLNEINEK…LAFIAAKIAL (193 aa)) form the ATP-grasp 1 domain. N6-acetyllysine; alternate occurs at positions 553 and 560. 2 positions are modified to N6-succinyllysine; alternate: Lys-553 and Lys-560. Lys-553 carries the post-translational modification N6-glutaryllysine; alternate. Ser-569 carries the post-translational modification Phosphoserine. N6-acetyllysine; alternate is present on residues Lys-575, Lys-603, and Lys-612. N6-succinyllysine; alternate is present on residues Lys-575, Lys-603, and Lys-612. Lys-630 is modified (N6-acetyllysine). Lys-728 carries the N6-glutaryllysine modification. N6-acetyllysine; alternate occurs at positions 751, 757, 772, 793, 811, 831, 840, 841, 856, 875, 889, and 892. Lys-751 and Lys-757 each carry N6-succinyllysine; alternate. N6-glutaryllysine; alternate is present on residues Lys-757, Lys-772, Lys-793, and Lys-811. Lys-793 carries the N6-succinyllysine; alternate modification. N6-succinyllysine; alternate is present on residues Lys-831 and Lys-840. An N6-glutaryllysine; alternate mark is found at Lys-841, Lys-856, Lys-875, Lys-889, and Lys-892. N6-succinyllysine; alternate is present on residues Lys-875, Lys-889, and Lys-892. Phosphoserine occurs at positions 896 and 898. N6-acetyllysine; alternate is present on residues Lys-908, Lys-915, and Lys-919. Residues Lys-908, Lys-915, and Lys-919 each carry the N6-glutaryllysine; alternate modification. N6-succinyllysine; alternate is present on residues Lys-915 and Lys-919. The residue at position 935 (Lys-935) is an N6-acetyllysine. At Ser-1036 the chain carries Phosphoserine. Lys-1074 is modified (N6-acetyllysine; alternate). Lys-1074 carries the post-translational modification N6-succinyllysine; alternate. Lys-1074 carries the N6-glutaryllysine; alternate modification. A phosphoserine mark is found at Ser-1079, Ser-1090, and Ser-1093. The region spanning 1093 to 1284 (SAVLDELKVA…FIDVATKVMI (192 aa)) is the ATP-grasp 2 domain. Position 1100 is an N6-acetyllysine; alternate (Lys-1100). N6-succinyllysine; alternate is present on Lys-1100. Lys-1149 carries the post-translational modification N6-succinyllysine. An N6-acetyllysine; alternate mark is found at Lys-1168 and Lys-1183. 2 positions are modified to N6-succinyllysine; alternate: Lys-1168 and Lys-1183. 2 positions are modified to N6-glutaryllysine; alternate: Lys-1168 and Lys-1183. Residue Ser-1203 is modified to Phosphoserine. Position 1222 is an N6-acetyllysine (Lys-1222). Lys-1224 bears the N6-glutaryllysine mark. N6-acetyllysine; alternate occurs at positions 1232, 1269, and 1291. N6-succinyllysine; alternate occurs at positions 1232, 1269, and 1291. Residue Ser-1331 is glycosylated (O-linked (GlcNAc) serine). Thr-1332 carries O-linked (GlcNAc) threonine glycosylation. An MGS-like domain is found at 1355–1500 (FKIPQKGILI…YRQYSAGKAA (146 aa)). At Lys-1356 the chain carries N6-acetyllysine; alternate. 2 positions are modified to N6-succinyllysine; alternate: Lys-1356 and Lys-1360. N6-glutaryllysine; alternate is present on residues Lys-1356 and Lys-1360. N-acetyl-L-glutamate is bound by residues Thr-1391, Thr-1394, and Trp-1410. Ser-1419 and Ser-1431 each carry phosphoserine. Residues Asn-1437 and Asn-1440 each contribute to the N-acetyl-L-glutamate site. Lys-1444 is modified (N6-acetyllysine; alternate). An N6-succinyllysine; alternate modification is found at Lys-1444. An N-acetyl-L-glutamate-binding site is contributed by Asn-1449. N6-acetyllysine; alternate occurs at positions 1471, 1479, and 1486. Residues Lys-1471, Lys-1479, and Lys-1486 each carry the N6-succinyllysine; alternate modification. N6-glutaryllysine; alternate occurs at positions 1479 and 1486.

Can form homooligomers (monomers as predominant form and dimers). As to quaternary structure, (Microbial infection) Interacts with P.berghei (ANKA strain) phospholipid scramblase PLSCR; the interaction is involved in the interaction between parasite sporozoites and host hepatocytes. Undergoes proteolytic cleavage in the C-terminal region corresponding to the loss of approximately 12 AA residues from the C-terminus. In terms of processing, acetylation of Lys-287, Lys-603, Lys-841 and Lys-1291 is observed in liver mitochondria from fasted mice but not from fed mice. Post-translationally, succinylated at Lys-44, Lys-287 and Lys-1291. Desuccinylated at Lys-1291 by SIRT5, leading to activation. Glutarylated. Glutarylation levels increase during fasting. Deglutarylated by SIRT5 at Lys-55, Lys-219, Lys-412, Lys-889, Lys-892, Lys-915, Lys-1360 and Lys-1486, leading to activation. As to expression, expressed in hepatocytes (at protein level).

Its subcellular location is the mitochondrion. The protein resides in the nucleus. It is found in the nucleolus. The protein localises to the cell membrane. The enzyme catalyses hydrogencarbonate + NH4(+) + 2 ATP = carbamoyl phosphate + 2 ADP + phosphate + 2 H(+). With respect to regulation, requires N-acetyl-L-glutamate (NAG) as an allosteric activator. Its function is as follows. Involved in the urea cycle of ureotelic animals where the enzyme plays an important role in removing excess ammonia from the cell. This chain is Carbamoyl-phosphate synthase [ammonia], mitochondrial (Cps1), found in Mus musculus (Mouse).